Reading from the N-terminus, the 138-residue chain is Ribosome-binding factor A (138 aa).

The protein belongs to the RbfA family. As to quaternary structure, monomer. Binds 30S ribosomal subunits, but not 50S ribosomal subunits or 70S ribosomes.

The protein localises to the cytoplasm. One of several proteins that assist in the late maturation steps of the functional core of the 30S ribosomal subunit. Associates with free 30S ribosomal subunits (but not with 30S subunits that are part of 70S ribosomes or polysomes). Required for efficient processing of 16S rRNA. May interact with the 5'-terminal helix region of 16S rRNA. The sequence is that of Ribosome-binding factor A from Bradyrhizobium sp. (strain BTAi1 / ATCC BAA-1182).